The chain runs to 326 residues: L-lactate dehydrogenase (326 aa).

NAD(+)-binding positions include V20, D41, K46, Y71, and 85–86; that span reads GA. Substrate contacts are provided by Q88 and R94. NAD(+) contacts are provided by residues S107, 124–126, and S149; that span reads AAN. 126-129 lines the substrate pocket; sequence NPVD. A substrate-binding site is contributed by 154–157; it reads DTAR. Beta-D-fructose 1,6-bisphosphate contacts are provided by residues R159, 171–174, and H174; that span reads RSVH. The active-site Proton acceptor is H181. The residue at position 226 (Y226) is a Phosphotyrosine. Residue T235 coordinates substrate.

The protein belongs to the LDH/MDH superfamily. LDH family. Homotetramer.

The protein resides in the cytoplasm. It carries out the reaction (S)-lactate + NAD(+) = pyruvate + NADH + H(+). It participates in fermentation; pyruvate fermentation to lactate; (S)-lactate from pyruvate: step 1/1. Allosterically activated by fructose 1,6-bisphosphate (FBP) alone under acidic conditions, while it requires additional activation factors such as divalent cations (Mn(2+)) under neutral conditions. Under acidic conditions, Mn(2+) is an inhibitor in the absence of fructose 1,6-bisphosphate (FBP). In case of L.casei, L-LDH binds four fructose 1,6-bisphosphate (FBP) molecules per tetramer, while usual allosteric L-LDH binds only two fructose 1,6-bisphosphate (FBP) molecules per tetramer. Its function is as follows. Catalyzes the conversion of lactate to pyruvate. This is L-lactate dehydrogenase from Lacticaseibacillus casei (Lactobacillus casei).